We begin with the raw amino-acid sequence, 888 residues long: MGCSHRLLLWLGAAGTILCSNSEFQTPFLTPSLLPVLVLNSQEQKVTPTPSKLEPASLPNPLGTRGPWVFNTCGASGRSGPTQTQCDGAYTGSSVMVTVGAAGPLKGVQLWRVPDTGQYLISAYGAAGGKGAQNHLSRAHGIFLSAVFFLRRGEPVYILVGQQGQDACPGGSPESQLVCLGESGEHATTYGTERIPGWRRWAGGGGGGGGATSIFRLRAGEPEPLLVAAGGGGRSYRRRPDRGRTQAVPERLETRAAAPGSGGRGGAAGGGSGWTSRAHSPQAGRSPREGAEGGEGCAEAWAALRWAAAGGFGGGGGACAAGGGGGGYRGGDTSESDLLWADGEDGTSFVHPSGELYLQPLAVTEGHGEVEIRKHPNCSHCPFKDCQWQAELWTAECTCPEGTELAVDNVTCMDLPTTASPLILMGAVVAALALSLLMMCAVLILVNQKCQGLWGTRLPGPELELSKLRSSAIRTAPNPYYCQVGLSPAQPWPLPPGLTEVSPANVTLLRALGHGAFGEVYEGLVTGLPGDSSPLPVAIKTLPELCSHQDELDFLMEALIISKFSHQNIVRCVGLSFRSAPRLILLELMSGGDMKSFLRHSRPHPGQLAPLTMQDLLQLAQDIAQGCHYLEENHFIHRDIAARNCLLSCSGASRVAKIGDFGMARDIYQASYYRKGGRTLLPVKWMPPEALLEGLFTSKTDSWSFGVLLWEIFSLGYMPYPGHTNQEVLDFIATGNRMDPPRNCPGPVYRIMTQCWQHQPELRPDFGSILERIQYCTQDPDVLNSPLPVEPGPILEEEEASRLGNRSLEGLRSPKPLELSSQNLKSWGGGLLGSWLPSGLKTLKPRCLQPQNIWNPTYGSWTPRGPQGEDTGIEHCNGSSSSSIPGIQ.

An N-terminal signal peptide occupies residues 1-16 (MGCSHRLLLWLGAAGT). The Extracellular portion of the chain corresponds to 17–421 (ILCSNSEFQT…CMDLPTTASP (405 aa)). 2 disulfides stabilise this stretch: Cys-73–Cys-86 and Cys-168–Cys-179. The segment at 226–294 (LVAAGGGGRS…RSPREGAEGG (69 aa)) is disordered. A compositionally biased stretch (gly residues) spans 260-273 (GSGGRGGAAGGGSG). A disulfide bridge links Cys-297 with Cys-319. Asn-377 and Asn-409 each carry an N-linked (GlcNAc...) asparagine glycan. A helical membrane pass occupies residues 422–446 (LILMGAVVAALALSLLMMCAVLILV). Residues 447-888 (NQKCQGLWGT…SSSSSIPGIQ (442 aa)) are Cytoplasmic-facing. The Protein kinase domain maps to 506-782 (VTLLRALGHG…IQYCTQDPDV (277 aa)). Residues 512–520 (LGHGAFGEV) and Lys-540 contribute to the ATP site. Catalysis depends on Asp-639, which acts as the Proton acceptor. Tyr-672 carries the post-translational modification Phosphotyrosine; by autocatalysis. The interval 857 to 888 (TYGSWTPRGPQGEDTGIEHCNGSSSSSIPGIQ) is disordered. Over residues 877-888 (NGSSSSSIPGIQ) the composition is skewed to polar residues.

It belongs to the protein kinase superfamily. Tyr protein kinase family. Insulin receptor subfamily. In terms of assembly, homodimer; homodimerizes following ligand-binding. Part of a complex including LTK, TNK2 and GRB2, in which GRB2 promotes LTK recruitment by TNK2. Post-translationally, phosphorylated at tyrosine residues by autocatalysis, which activates kinase activity. Subsets of lymphoid and neuronal cells.

It localises to the cell membrane. It is found in the endoplasmic reticulum. The catalysed reaction is L-tyrosyl-[protein] + ATP = O-phospho-L-tyrosyl-[protein] + ADP + H(+). With respect to regulation, activated by ligand-binding, leading to homodimerization and autophosphorylation. Functionally, receptor with a tyrosine-protein kinase activity. Following activation by ALKAL1 or ALKAL2 ligands at the cell surface, transduces an extracellular signal into an intracellular response. Ligand-binding to the extracellular domain induces tyrosine kinase activation, leading to activation of the mitogen-activated protein kinase (MAPK) pathway. Phosphorylates almost exclusively at the first tyrosine of the Y-x-x-x-Y-Y motif. The exact function of this protein is not known; studies with chimeric proteins demonstrate its ability to promote growth and specifically neurite outgrowth, and cell survival. Involved in regulation of the secretory pathway involving endoplasmic reticulum (ER) export sites (ERESs) and ER to Golgi transport. In Mus musculus (Mouse), this protein is Leukocyte tyrosine kinase receptor.